We begin with the raw amino-acid sequence, 343 residues long: Ribosomal RNA small subunit methyltransferase C (343 aa).

Belongs to the methyltransferase superfamily. RsmC family. Monomer.

The protein resides in the cytoplasm. The enzyme catalyses guanosine(1207) in 16S rRNA + S-adenosyl-L-methionine = N(2)-methylguanosine(1207) in 16S rRNA + S-adenosyl-L-homocysteine + H(+). Its function is as follows. Specifically methylates the guanine in position 1207 of 16S rRNA in the 30S particle. This chain is Ribosomal RNA small subunit methyltransferase C, found in Shigella boydii serotype 4 (strain Sb227).